Reading from the N-terminus, the 254-residue chain is Dihydroorotate dehydrogenase B (NAD(+)), electron transfer subunit (254 aa).

The region spanning Met-1–Ile-99 is the FAD-binding FR-type domain. FAD is bound by residues Arg-50–Ser-53, Leu-67–Arg-69, and Gly-74–Thr-75. Residues Cys-218, Cys-223, Cys-226, and Cys-241 each coordinate [2Fe-2S] cluster.

The protein belongs to the PyrK family. As to quaternary structure, heterotetramer of 2 PyrK and 2 PyrD type B subunits. It depends on [2Fe-2S] cluster as a cofactor. FAD is required as a cofactor.

The protein operates within pyrimidine metabolism; UMP biosynthesis via de novo pathway; orotate from (S)-dihydroorotate (NAD(+) route): step 1/1. In terms of biological role, responsible for channeling the electrons from the oxidation of dihydroorotate from the FMN redox center in the PyrD type B subunit to the ultimate electron acceptor NAD(+). This is Dihydroorotate dehydrogenase B (NAD(+)), electron transfer subunit from Listeria welshimeri serovar 6b (strain ATCC 35897 / DSM 20650 / CCUG 15529 / CIP 8149 / NCTC 11857 / SLCC 5334 / V8).